The following is a 434-amino-acid chain: Methylenetetrahydrofolate--tRNA-(uracil-5-)-methyltransferase TrmFO (434 aa).

FAD is bound at residue 10–15; that stretch reads GAGLAG.

It belongs to the MnmG family. TrmFO subfamily. It depends on FAD as a cofactor.

It localises to the cytoplasm. The catalysed reaction is uridine(54) in tRNA + (6R)-5,10-methylene-5,6,7,8-tetrahydrofolate + NADH + H(+) = 5-methyluridine(54) in tRNA + (6S)-5,6,7,8-tetrahydrofolate + NAD(+). The enzyme catalyses uridine(54) in tRNA + (6R)-5,10-methylene-5,6,7,8-tetrahydrofolate + NADPH + H(+) = 5-methyluridine(54) in tRNA + (6S)-5,6,7,8-tetrahydrofolate + NADP(+). Catalyzes the folate-dependent formation of 5-methyl-uridine at position 54 (M-5-U54) in all tRNAs. This Bacillus cereus (strain Q1) protein is Methylenetetrahydrofolate--tRNA-(uracil-5-)-methyltransferase TrmFO.